The sequence spans 351 residues: Basic salivary proline-rich protein 3 (351 aa).

The N-terminal stretch at 1–16 (MLLILLSVALLALSSA) is a signal peptide. Glutamine 17 is modified (pyrrolidone carboxylic acid). Residues 17-351 (QSLNEDVSQE…HRPPQGQPPQ (335 aa)) are disordered. Positions 20 to 31 (NEDVSQEESPSV) are enriched in polar residues. At serine 24 the chain carries Phosphoserine. 12 tandem repeats follow at residues 53–73 (PPGKPEGRPPQGGNQSQGPPP), 74–94 (RPGKPEGPPPQGGNQSQGPPP), 95–115 (RPGKPEGQPPQGGNQSQGPPP), 116–136 (RPGKPEGPPPQGGNQSQGPPP), 137–157 (RPGKPEGPPPQGGNQSQGPPP), 158–178 (RPGKPEGPPPQGGNQSQGPPP), 179–199 (HPGKPEGPPPQGGNQSQGPPP), 200–220 (RPGKPEGPPPQGGNQSQGPPP), 221–241 (RPGKPEGPPPQGGNKPQGPPP), 242–261 (RPGKPEGPPPQGGNQSQGPP), 263–283 (RPGKPEGPPSQGGNKPQGPPP), and 284–304 (HPGKPQGPPPQEGNKPQRPPP). The tract at residues 53-304 (PPGKPEGRPP…EGNKPQRPPP (252 aa)) is 12 X 21 AA tandem repeats of [RHP]-P-G-K-P-[EQ]-G-[PQS]-P-[PS]-Q-[GE]-G-N-[QK]-[SP]-[QR]-[GR]-P-P-P. A glycan (N-linked (GlcNAc...) asparagine) is linked at asparagine 66. Residues 70–84 (GPPPRPGKPEGPPPQ) show a composition bias toward pro residues. Asparagine 87 carries an N-linked (GlcNAc...) asparagine glycan. Serine 89 is a glycosylation site (O-linked (Hex) serine). A compositionally biased stretch (low complexity) spans 99-111 (PEGQPPQGGNQSQ). Residue asparagine 108 is glycosylated (N-linked (GlcNAc...) asparagine). Residues 112–126 (GPPPRPGKPEGPPPQ) are compositionally biased toward pro residues. Residue asparagine 129 is glycosylated (N-linked (GlcNAc...) asparagine). Positions 133-147 (GPPPRPGKPEGPPPQ) are enriched in pro residues. The N-linked (GlcNAc...) asparagine glycan is linked to asparagine 150. Pro residues-rich tracts occupy residues 154 to 168 (GPPPRPGKPEGPPPQ) and 175 to 189 (GPPPHPGKPEGPPPQ). An N-linked (GlcNAc...) asparagine glycan is attached at asparagine 192. Residues 196–210 (GPPPRPGKPEGPPPQ) show a composition bias toward pro residues. N-linked (GlcNAc...) asparagine glycans are attached at residues asparagine 213 and asparagine 234. Composition is skewed to pro residues over residues 217-252 (GPPPRPGKPEGPPPQGGNKPQGPPPRPGKPEGPPPQ), 259-270 (GPPPRPGKPEGP), and 279-351 (QGPP…QPPQ). Asparagine 297 is a glycosylation site (N-linked (Hex) asparagine; atypical).

Post-translationally, N- and O-glycosylated; contains about 50% carbohydrate. This is composed of highly fucosylated N-linked saccharides, the major structure is a biantennary asialosaccharide containing 2 fucose residues on one antenna and an unsubstituted terminal lactosamine sequence on the other. The Gram-negative bacterium F.nucleatum binds to carbohydrates containing unsubstituted GalBeta1,4GlcNAc residues. N-glycosylation on Asn-87 is prevalent in head and neck cancer patients. In terms of processing, proteolytically cleaved at the tripeptide Xaa-Pro-Gln, where Xaa in the P(3) position is mostly lysine. The endoprotease may be of microbial origin. Besides on the N-terminal of mature PRB3, pyroglutamate formation found on at least Gln-67, Gln-88, Gln-256 and Gln-337.

Its subcellular location is the secreted. Acts as a receptor for the Gram-negative bacterium F.nucleatum. The polypeptide is Basic salivary proline-rich protein 3 (PRB3) (Homo sapiens (Human)).